The chain runs to 502 residues: MRIGFDHEKYLEEQSKYILERVNNYDKLYLEFGGKLLFDLHAKRVLPGFDENAKIKLLHKLKEKVEIIICLYAGDIERNKIRGDFGITYDVDVLRLIDDLRGYDLEVNSVVITRYSGQPATNIFINKLERRGIKVYKHEATKGYPTDVDTIVSDEGYGKNPYIETTKPIVVVTAPGPGSGKLATCLSQLYHEYKRGNVAGYSKFETFPVWNVPLKHPLNIAYESATVDLKDVNMIDSFHFDAYNKVAVNYNRDIESFPVLKRIIEKITGEESVYKSPTDMGVNRVGFGIVDDEVVKEASKQEIIRRAFKTACEYKKGYVDKETFHRAKLIMEEMNLKEEDRKVVIPAREYAAKLKERANKSETCTVVALELEDGTILTGRSSELMDGTAAVILNAVKHYANISDEIHLISPVILEPIINLKAKTLGSKRTALSCEEVLIALSICAATNPTAQVAMGKLPMLKGCQAHSTTILSTNEEQTFRKLGIDVTCDPEYISESLYYNN.

This sequence belongs to the UPF0371 family.

This chain is UPF0371 protein CLK_3516, found in Clostridium botulinum (strain Loch Maree / Type A3).